The following is a 390-amino-acid chain: L-seryl-tRNA(Sec) selenium transferase (390 aa).

At K225 the chain carries N6-(pyridoxal phosphate)lysine.

The protein belongs to the SelA family. It depends on pyridoxal 5'-phosphate as a cofactor.

It is found in the cytoplasm. It catalyses the reaction L-seryl-tRNA(Sec) + selenophosphate + H(+) = L-selenocysteinyl-tRNA(Sec) + phosphate. It participates in aminoacyl-tRNA biosynthesis; selenocysteinyl-tRNA(Sec) biosynthesis; selenocysteinyl-tRNA(Sec) from L-seryl-tRNA(Sec) (bacterial route): step 1/1. In terms of biological role, converts seryl-tRNA(Sec) to selenocysteinyl-tRNA(Sec) required for selenoprotein biosynthesis. This chain is L-seryl-tRNA(Sec) selenium transferase, found in Helicobacter pylori (strain P12).